We begin with the raw amino-acid sequence, 71 residues long: Serine palmitoyltransferase small subunit A (71 aa).

At 1 to 12 the chain is on the cytoplasmic side; that stretch reads MAGMALARAWKQ. A helical membrane pass occupies residues 13-29; sequence MSWFYYQYLLVTALYML. Topologically, residues 30–34 are lumenal; the sequence is EPWER. A helical transmembrane segment spans residues 35 to 57; the sequence is TVFNSMLVSIVGMALYTGYVFMP. The Cytoplasmic segment spans residues 58–71; that stretch reads QHIMAILHYFEIVQ.

Belongs to the SPTSS family. SPTSSA subfamily. As to quaternary structure, component of the serine palmitoyltransferase (SPT) complex, which is composed of SPTLC1, SPTLC2 or SPTLC3 and SPTSSA or SPTSSB. The heterodimer consisting of SPTLC1 and SPTLC2/SPTLC3 forms the catalytic core of the enzyme, while SPTSSA or SPTSSB subunits determine substrate specificity. SPT also interacts with ORMDL proteins, especially ORMDL3, which negatively regulate SPT activity in the presence of ceramides. Interacts with MBOAT7; the interaction plays a role in MBOAT7 localization to mitochondria-associated membranes.

The protein localises to the endoplasmic reticulum membrane. The protein operates within lipid metabolism; sphingolipid metabolism. Its function is as follows. Component of the serine palmitoyltransferase multisubunit enzyme (SPT) that catalyzes the initial and rate-limiting step in sphingolipid biosynthesis by condensing L-serine and activated acyl-CoA (most commonly palmitoyl-CoA) to form long-chain bases. The SPT complex is composed of SPTLC1, SPTLC2 or SPTLC3 and SPTSSA or SPTSSB. Within this complex, the heterodimer consisting of SPTLC1 and SPTLC2/SPTLC3 forms the catalytic core. Within the SPT complex, SPTSSA stimulates the catalytic activity and plays a role in substrate specificity, which depends upon the overall complex composition. The SPTLC1-SPTLC2-SPTSSA complex shows a strong preference for C16-CoA substrate, while the SPTLC1-SPTLC3-SPTSSA isozyme uses both C14-CoA and C16-CoA as substrates, with a slight preference for C14-CoA. Independently of its action as a SPT component, may be involved in MBOAT7 localization to mitochondria-associated membranes, a membrane bridge between the endoplasmic reticulum and mitochondria, may hence affect MBOAT7-catalyzed incorporation of arachidonic acid into phosphatidylinositol. The sequence is that of Serine palmitoyltransferase small subunit A from Homo sapiens (Human).